A 522-amino-acid chain; its full sequence is WEB family protein At2g38370 (522 aa).

A disordered region spans residues Met-1–Phe-32. Coiled-coil stretches lie at residues Glu-77–Glu-264 and Ala-299–Asn-376. Disordered stretches follow at residues Ser-374 to Glu-397 and Met-458 to Lys-493. Positions Thr-473–Arg-486 are enriched in basic and acidic residues.

Belongs to the WEB family.

This Arabidopsis thaliana (Mouse-ear cress) protein is WEB family protein At2g38370.